A 165-amino-acid chain; its full sequence is Cyanate hydratase (165 aa).

The disordered stretch occupies residues 1 to 20; sequence MAQNKANTVSQLQSLKNKSG. Active-site residues include arginine 90, glutamate 93, and serine 116.

This sequence belongs to the cyanase family.

The enzyme catalyses cyanate + hydrogencarbonate + 3 H(+) = NH4(+) + 2 CO2. In terms of biological role, catalyzes the reaction of cyanate with bicarbonate to produce ammonia and carbon dioxide. This Medicago truncatula (Barrel medic) protein is Cyanate hydratase.